The primary structure comprises 398 residues: E3 ubiquitin-protein ligase ATL6 (398 aa).

A signal peptide spans 1–29 (MRSSDHMAFAGVLPIVFLLILSSADLAAS). Residues 50 to 70 (AVIVVILIAALFFMGFFSIYF) form a helical membrane-spanning segment. The segment at 128 to 170 (CAICLNEFEDDETLRLLPKCDHVFHPHCIDAWLEAHVTCPVCR) adopts an RING-type; atypical zinc-finger fold. At Ser278 the chain carries Phosphoserine. Positions 368-398 (PRGGVNKDGEGTSVKSTGASGSTSGSVRLPV) are disordered. The span at 378–398 (GTSVKSTGASGSTSGSVRLPV) shows a compositional bias: low complexity.

It belongs to the RING-type zinc finger family. ATL subfamily.

The protein resides in the membrane. It carries out the reaction S-ubiquitinyl-[E2 ubiquitin-conjugating enzyme]-L-cysteine + [acceptor protein]-L-lysine = [E2 ubiquitin-conjugating enzyme]-L-cysteine + N(6)-ubiquitinyl-[acceptor protein]-L-lysine.. Its pathway is protein modification; protein ubiquitination. In terms of biological role, E3 ubiquitin-protein ligase able to catalyze polyubiquitination with ubiquitin-conjugating enzyme E2 UBC8 in vitro. May be involved in the plant C/N response and the early steps of the plant defense signaling pathway. The chain is E3 ubiquitin-protein ligase ATL6 (ATL6) from Arabidopsis thaliana (Mouse-ear cress).